A 164-amino-acid chain; its full sequence is Transcription antitermination protein NusB (164 aa).

The protein belongs to the NusB family.

Involved in transcription antitermination. Required for transcription of ribosomal RNA (rRNA) genes. Binds specifically to the boxA antiterminator sequence of the ribosomal RNA (rrn) operons. The polypeptide is Transcription antitermination protein NusB (Chlamydia muridarum (strain MoPn / Nigg)).